The sequence spans 411 residues: Serpin A3-3 (411 aa).

An N-terminal signal peptide occupies residues 1–24; that stretch reads MRAERLSPLLALGLLVAGIRSVHC. N-linked (GlcNAc...) asparagine glycans are attached at residues N100, N180, N230, N264, and N318.

It belongs to the serpin family. Homodimer.

The protein localises to the cytoplasmic vesicle. The protein resides in the secretory vesicle. It localises to the chromaffin granule. Its subcellular location is the secreted. Serine protease inhibitor. Strongly inhibits elastase and trypsin stoichiometrically at the molar ratio of 1:1. Acts as a moderate inhibitor of plasmin and chymotrypsin. Does not inhibit thrombin, urokinase, kallikrein, tissue plasminogen activator, cathepsin G or the cysteine proteases papain, cathepsin B or cathepsin L. The sequence is that of Serpin A3-3 (SERPINA3-3) from Bos taurus (Bovine).